Consider the following 244-residue polypeptide: Protein IN2-1 homolog B (244 aa).

Positions 1–27 (MAAAAAAPASSEKEVLPPSLTSSSEPP) are disordered. Positions 32 to 113 (GTTRLYVAYH…YIDTNFEGPA (82 aa)) constitute a GST N-terminal domain. Glutathione is bound by residues V85 and 97–98 (ES). Residues 118 to 241 (DSEKQQFAEE…FLLEHTKKRL (124 aa)) enclose the GST C-terminal domain.

This chain is Protein IN2-1 homolog B (GSTZ5), found in Oryza sativa subsp. indica (Rice).